The primary structure comprises 1108 residues: Isoleucine--tRNA ligase (1108 aa).

A 'HIGH' region motif is present at residues 53–63 (PFANGLPHYGH). Residues 654 to 658 (KLSKR) carry the 'KMSKS' region motif. Lysine 657 contributes to the ATP binding site.

Belongs to the class-I aminoacyl-tRNA synthetase family. IleS type 2 subfamily. As to quaternary structure, monomer. Requires Zn(2+) as cofactor.

It localises to the cytoplasm. It carries out the reaction tRNA(Ile) + L-isoleucine + ATP = L-isoleucyl-tRNA(Ile) + AMP + diphosphate. In terms of biological role, catalyzes the attachment of isoleucine to tRNA(Ile). As IleRS can inadvertently accommodate and process structurally similar amino acids such as valine, to avoid such errors it has two additional distinct tRNA(Ile)-dependent editing activities. One activity is designated as 'pretransfer' editing and involves the hydrolysis of activated Val-AMP. The other activity is designated 'posttransfer' editing and involves deacylation of mischarged Val-tRNA(Ile). The sequence is that of Isoleucine--tRNA ligase from Rickettsia bellii (strain RML369-C).